Here is a 134-residue protein sequence, read N- to C-terminus: UPF0412 protein YaaI (134 aa).

The N-terminal stretch at M1–A23 is a signal peptide.

This sequence belongs to the UPF0412 family.

This is UPF0412 protein YaaI from Salmonella agona (strain SL483).